A 427-amino-acid polypeptide reads, in one-letter code: Trigger factor (427 aa).

A PPIase FKBP-type domain is found at 163–248 (GDIVVIDFAG…LKEIKRKELA (86 aa)).

This sequence belongs to the FKBP-type PPIase family. Tig subfamily.

Its subcellular location is the cytoplasm. It carries out the reaction [protein]-peptidylproline (omega=180) = [protein]-peptidylproline (omega=0). Its function is as follows. Involved in protein export. Acts as a chaperone by maintaining the newly synthesized protein in an open conformation. Functions as a peptidyl-prolyl cis-trans isomerase. The chain is Trigger factor from Carboxydothermus hydrogenoformans (strain ATCC BAA-161 / DSM 6008 / Z-2901).